Here is a 556-residue protein sequence, read N- to C-terminus: 2-succinyl-5-enolpyruvyl-6-hydroxy-3-cyclohexene-1-carboxylate synthase (556 aa).

Belongs to the TPP enzyme family. MenD subfamily. In terms of assembly, homodimer. Mg(2+) is required as a cofactor. Requires Mn(2+) as cofactor. Thiamine diphosphate serves as cofactor.

The enzyme catalyses isochorismate + 2-oxoglutarate + H(+) = 5-enolpyruvoyl-6-hydroxy-2-succinyl-cyclohex-3-ene-1-carboxylate + CO2. It participates in quinol/quinone metabolism; 1,4-dihydroxy-2-naphthoate biosynthesis; 1,4-dihydroxy-2-naphthoate from chorismate: step 2/7. The protein operates within quinol/quinone metabolism; menaquinone biosynthesis. Its function is as follows. Catalyzes the thiamine diphosphate-dependent decarboxylation of 2-oxoglutarate and the subsequent addition of the resulting succinic semialdehyde-thiamine pyrophosphate anion to isochorismate to yield 2-succinyl-5-enolpyruvyl-6-hydroxy-3-cyclohexene-1-carboxylate (SEPHCHC). The polypeptide is 2-succinyl-5-enolpyruvyl-6-hydroxy-3-cyclohexene-1-carboxylate synthase (Salmonella paratyphi A (strain AKU_12601)).